Here is a 193-residue protein sequence, read N- to C-terminus: Cytidylate kinase (193 aa).

12-20 is a binding site for ATP; that stretch reads GLAGSGTTT.

The protein belongs to the cytidylate kinase family. Type 2 subfamily.

It is found in the cytoplasm. It carries out the reaction CMP + ATP = CDP + ADP. The enzyme catalyses dCMP + ATP = dCDP + ADP. This Thermococcus kodakarensis (strain ATCC BAA-918 / JCM 12380 / KOD1) (Pyrococcus kodakaraensis (strain KOD1)) protein is Cytidylate kinase.